Reading from the N-terminus, the 425-residue chain is Transmembrane protein 184A (425 aa).

7 helical membrane passes run 51-71, 96-116, 133-153, 189-209, 226-246, 261-281, and 303-323; these read LFLTSALARGVSGVFVWTALL, LLFIVPIYAFDSWLSLLLLGG, FVIYSFLTLCFQYLGGESAIM, TLQFCIVKPVMALITIILQAF, VTLVYNASVSLALYALFLFYF, FLTIKAIIFLSFWQGMLLAIL, and LAAGYQNFLICVEMLFASLAL. The disordered stretch occupies residues 375–425; that stretch reads QYTQQSTHEAPGPGQGGHPAPSTHPGPASGSGGGKKSRNIEKRMLIPSEDL. A compositionally biased stretch (low complexity) spans 392-402; the sequence is HPAPSTHPGPA.

The protein belongs to the TMEM184 family. In terms of tissue distribution, expressed in testis, pancreas, parotid salivary gland and mammary gland (at protein level).

Its subcellular location is the cell membrane. The protein localises to the cytoplasm. The protein resides in the perinuclear region. It is found in the cytoplasmic vesicle membrane. It localises to the early endosome membrane. Its subcellular location is the endosome. The protein localises to the cytoplasmic vesicle. The protein resides in the secretory vesicle membrane. Functionally, acts as a heparin receptor in vascular cells. May be involved in vesicle transport in exocrine cells and Sertoli cells. This Mus musculus (Mouse) protein is Transmembrane protein 184A (Tmem184a).